We begin with the raw amino-acid sequence, 309 residues long: Cyclin-dependent kinase B1-1 (309 aa).

In terms of domain architecture, Protein kinase spans 4 to 301; that stretch reads YEKLEKVGEG…AKTALDHPYF (298 aa). Residues 10–18 and lysine 33 contribute to the ATP site; that span reads VGEGTYGKV. Phosphotyrosine is present on tyrosine 15. Aspartate 142 acts as the Proton acceptor in catalysis. Phosphothreonine; by CAK is present on threonine 176.

Belongs to the protein kinase superfamily. CMGC Ser/Thr protein kinase family. CDC2/CDKX subfamily. As to quaternary structure, interacts with CKS1. Interacts with CYCU3-1. Interacts with SIM, SMR1 and SMR2. As to expression, highly expressed in guard cells and stomatal precursor cells of cotyledons. Expressed in roots, stems, flowers and siliques.

It localises to the nucleus. The catalysed reaction is L-seryl-[protein] + ATP = O-phospho-L-seryl-[protein] + ADP + H(+). It carries out the reaction L-threonyl-[protein] + ATP = O-phospho-L-threonyl-[protein] + ADP + H(+). It catalyses the reaction [DNA-directed RNA polymerase] + ATP = phospho-[DNA-directed RNA polymerase] + ADP + H(+). With respect to regulation, phosphorylation at Thr-14 or Tyr-15 inactivates the enzyme, while phosphorylation at Thr-176 activates it. May control G2/M (mitosis) phase progression. Plays a role in regulating seedling growth in darkness via regulation of hypocotyl cell elongation and cotyledon cell development. Plays a role in stomatal development. Required to suppress endoreduplication. Together with CDKB1-2, promotes both the last division in the stomatal cell lineage as well as the number of stomata. In collaboration with MYB124 and MYB88, restrict the G1/S transition and chloroplast and nuclear number during stomatal formation, and normally maintain fate and developmental progression throughout the stomatal cell lineage. This is Cyclin-dependent kinase B1-1 (CDKB1-1) from Arabidopsis thaliana (Mouse-ear cress).